The following is a 324-amino-acid chain: Beta-ketoacyl-[acyl-carrier-protein] synthase III (324 aa).

Residues cysteine 114 and histidine 246 contribute to the active site. The interval 247-251 (QANLR) is ACP-binding. Residue asparagine 276 is part of the active site.

Belongs to the thiolase-like superfamily. FabH family. As to quaternary structure, homodimer.

It localises to the cytoplasm. The enzyme catalyses malonyl-[ACP] + acetyl-CoA + H(+) = 3-oxobutanoyl-[ACP] + CO2 + CoA. It participates in lipid metabolism; fatty acid biosynthesis. Its function is as follows. Catalyzes the condensation reaction of fatty acid synthesis by the addition to an acyl acceptor of two carbons from malonyl-ACP. Catalyzes the first condensation reaction which initiates fatty acid synthesis and may therefore play a role in governing the total rate of fatty acid production. Possesses both acetoacetyl-ACP synthase and acetyl transacylase activities. Its substrate specificity determines the biosynthesis of branched-chain and/or straight-chain of fatty acids. The chain is Beta-ketoacyl-[acyl-carrier-protein] synthase III from Campylobacter jejuni subsp. jejuni serotype O:2 (strain ATCC 700819 / NCTC 11168).